We begin with the raw amino-acid sequence, 525 residues long: GMP synthase [glutamine-hydrolyzing] (525 aa).

Residues 9–207 (RILILDFGSQ…VQDICGCEAL (199 aa)) form the Glutamine amidotransferase type-1 domain. The Nucleophile role is filled by Cys86. Catalysis depends on residues His181 and Glu183. The GMPS ATP-PPase domain occupies 208–400 (WTPSNIVEDA…LGLPYDMVYR (193 aa)). 235–241 (SGGVDSS) serves as a coordination point for ATP.

As to quaternary structure, homodimer.

It catalyses the reaction XMP + L-glutamine + ATP + H2O = GMP + L-glutamate + AMP + diphosphate + 2 H(+). Its pathway is purine metabolism; GMP biosynthesis; GMP from XMP (L-Gln route): step 1/1. Its function is as follows. Catalyzes the synthesis of GMP from XMP. The polypeptide is GMP synthase [glutamine-hydrolyzing] (Pseudomonas putida (strain W619)).